The primary structure comprises 365 residues: AP2/ERF and B3 domain-containing protein Os01g0141000 (365 aa).

Positions 1–24 are disordered; sequence MGVVSFSSTSSGASTATTESGGAV. A DNA-binding region (AP2/ERF) is located at residues 68 to 123; it reads RYKGVVPQPNGRWGAQIYERHARVWLGTFPDEEAAARAYDVAALRYRGRDAATNFP. A DNA-binding region (TF-B3) is located at residues 182–294; sequence FEKAVTPSDV…KLLFIDCKKN (113 aa).

The protein resides in the nucleus. This Oryza sativa subsp. japonica (Rice) protein is AP2/ERF and B3 domain-containing protein Os01g0141000.